Here is a 321-residue protein sequence, read N- to C-terminus: Protease HtpX homolog (321 aa).

Helical transmembrane passes span 6–26 (TAML…LIGG) and 28–48 (GGMM…YWNS). His130 contributes to the Zn(2+) binding site. The active site involves Glu131. His134 contributes to the Zn(2+) binding site. 2 consecutive transmembrane segments (helical) span residues 145 to 165 (ITAT…FFGG) and 173 to 193 (PLGF…AMLV). Residue Glu202 participates in Zn(2+) binding. The interval 281–321 (EFSPRASTPPPSGDRPVRKSGSVPTTGWRRGNENERKGPWS) is disordered. Residues 310–321 (RGNENERKGPWS) show a composition bias toward basic and acidic residues.

The protein belongs to the peptidase M48B family. Requires Zn(2+) as cofactor.

The protein localises to the cell inner membrane. The sequence is that of Protease HtpX homolog from Agrobacterium fabrum (strain C58 / ATCC 33970) (Agrobacterium tumefaciens (strain C58)).